The chain runs to 187 residues: Small ribosomal subunit protein uS5 (187 aa).

The S5 DRBM domain maps to F20–V83. Positions K155–A187 are disordered. The span at K170–A181 shows a compositional bias: basic and acidic residues.

It belongs to the universal ribosomal protein uS5 family. As to quaternary structure, part of the 30S ribosomal subunit. Contacts proteins S4 and S8.

Its function is as follows. With S4 and S12 plays an important role in translational accuracy. Functionally, located at the back of the 30S subunit body where it stabilizes the conformation of the head with respect to the body. The chain is Small ribosomal subunit protein uS5 from Ruegeria sp. (strain TM1040) (Silicibacter sp.).